A 670-amino-acid polypeptide reads, in one-letter code: Sodium/glucose cotransporter 2 (670 aa).

Residues 1–20 (MEGHVEEGSELGEQKVLIDN) are Extracellular-facing. The chain crosses the membrane as a helical span at residues 21–42 (PADILVIAAYFLLVIGVGLWSM). Residues 43–61 (FRTNRGTVGGYFLAGRSMV) are Cytoplasmic-facing. A helical membrane pass occupies residues 62–83 (WWPVGASLFASNIGSGHFVGLA). Na(+)-binding residues include Ala71 and Ile74. Over 84–91 (GTGAASGL) the chain is Extracellular. The helical transmembrane segment at 92-112 (AVAGFEWNALFVVLLLGWLFV) threads the bilayer. The Cytoplasmic portion of the chain corresponds to 113 to 134 (PVYLTAGVITMPQYLRKRFGGR). Residues 135-164 (RIRLYLSVLSLFLYIFTKISVDMFSGAVFI) traverse the membrane as a helical segment. At 165–171 (QQALGWN) the chain is on the extracellular side. 2 helical membrane-spanning segments follow: residues 172-193 (IYASVIALLGITMIYTVTGGLA) and 194-215 (ALMYTDTVQTFVILAGAFILTG). At 216–273 (YAFHEVGGYSGLFDKYLGAVTSLTVSKDPAVGNISSTCYQPRPDSYHLLRDPVTGGLP) the chain is on the extracellular side. A glycan (N-linked (GlcNAc...) asparagine) is linked at Asn248. Disulfide bonds link Cys253/Cys509, Cys343/Cys349, Cys353/Cys359, and Cys515/Cys520. A helical membrane pass occupies residues 274-293 (WPALLLGLTIVSGWHWCSDQ). At 294–307 (VIVQRCLAGKNLTH) the chain is on the cytoplasmic side. A helical transmembrane segment spans residues 308-329 (IKAGCILCGYLKLMPMFLMVMP). At 330–373 (GMISRILYPDEVACVVPEVCKRVCGTEVGCSNIAYPRLVVKLMP) the chain is on the extracellular side. A helical transmembrane segment spans residues 374 to 404 (NGLRGLMLAVMLAALMSSLASIFNSSSTLFT). The Na(+) site is built by Ala387, Ser390, and Ser391. At 405–422 (MDIYTRLRPRAGDRELLL) the chain is on the cytoplasmic side. Residues 423 to 444 (VGRLWVVFIVAVSVAWLPVVQA) traverse the membrane as a helical segment. The Extracellular segment spans residues 445–449 (AQGGQ). Residues 450–475 (LFDYIQSVSSYLAPPVSAVFVLALFV) traverse the membrane as a helical segment. The Cytoplasmic portion of the chain corresponds to 476-480 (PRVNE). The helical transmembrane segment at 481 to 503 (KGAFWGLIGGLLMGLARLIPEFF) threads the bilayer. Residues 504 to 521 (FGTGSCVRPSACPAIFCR) lie on the Extracellular side of the membrane. A helical membrane pass occupies residues 522–545 (VHYLYFAIILFFCSGFLTLAISRC). Topologically, residues 546-649 (TAPIPQKHLH…DISEDPSWAR (104 aa)) are cytoplasmic. A helical transmembrane segment spans residues 650–668 (VVNLNALLMMTVAVFLWGF). At 669–670 (YA) the chain is on the extracellular side.

This sequence belongs to the sodium:solute symporter (SSF) (TC 2.A.21) family. Forms a heterodimer (via TM13) with PDZK1IP1 (via N-terminal transmembrane helix); this interaction enhances SLC5A2 transporter activity. Glycosylated at a single site. As to expression, kidney, in proximal tubule S1 segments.

Its subcellular location is the apical cell membrane. It carries out the reaction D-glucose(out) + Na(+)(out) = D-glucose(in) + Na(+)(in). Enhanced by the interaction with PDZK1IP1/MAP17. Electrogenic Na(+)-coupled sugar symporter that actively transports D-glucose at the plasma membrane, with a Na(+) to sugar coupling ratio of 1:1. Transporter activity is driven by a transmembrane Na(+) electrochemical gradient set by the Na(+)/K(+) pump. Unlike SLC5A1/SGLT1, requires the auxiliary protein PDZK1IP1/MAP17 for full transporter activity. Has a primary role in D-glucose reabsorption from glomerular filtrate across the brush border of the early proximal tubules of the kidney. In Rattus norvegicus (Rat), this protein is Sodium/glucose cotransporter 2 (Slc5a2).